The primary structure comprises 231 residues: Orotidine 5'-phosphate decarboxylase (231 aa).

Residues Asp-11, Lys-34, 61–70, Thr-117, Arg-179, Gln-188, Gly-208, and Arg-209 each bind substrate; that span reads DLKLHDIPNT. Lys-63 serves as the catalytic Proton donor.

The protein belongs to the OMP decarboxylase family. Type 1 subfamily. As to quaternary structure, homodimer.

It catalyses the reaction orotidine 5'-phosphate + H(+) = UMP + CO2. Its pathway is pyrimidine metabolism; UMP biosynthesis via de novo pathway; UMP from orotate: step 2/2. In terms of biological role, catalyzes the decarboxylation of orotidine 5'-monophosphate (OMP) to uridine 5'-monophosphate (UMP). The protein is Orotidine 5'-phosphate decarboxylase of Streptococcus thermophilus (strain CNRZ 1066).